A 471-amino-acid polypeptide reads, in one-letter code: Bifunctional protein GlmU (471 aa).

The segment at 1–232 is pyrophosphorylase; it reads MSDITAVLLA…EEDALAPNDR (232 aa). Residues 9–12, Lys-23, Gln-73, 78–79, 102–104, Gly-141, Glu-157, and Asn-230 each bind UDP-N-acetyl-alpha-D-glucosamine; these read LAAG, GT, and YGD. Residue Asp-104 participates in Mg(2+) binding. Asn-230 is a Mg(2+) binding site. Positions 233 to 253 are linker; it reads VELARAEARLRRQINERHMRN. The tract at residues 254 to 471 is N-acetyltransferase; that stretch reads GVTIINPDAT…RQRKMNREGT (218 aa). Positions 335 and 353 each coordinate UDP-N-acetyl-alpha-D-glucosamine. His-365 serves as the catalytic Proton acceptor. 2 residues coordinate UDP-N-acetyl-alpha-D-glucosamine: Tyr-368 and Asn-379. Acetyl-CoA contacts are provided by residues Ala-382, 388-389, Ala-425, and Arg-444; that span reads NY.

It in the N-terminal section; belongs to the N-acetylglucosamine-1-phosphate uridyltransferase family. This sequence in the C-terminal section; belongs to the transferase hexapeptide repeat family. In terms of assembly, homotrimer. It depends on Mg(2+) as a cofactor.

It localises to the cytoplasm. The catalysed reaction is alpha-D-glucosamine 1-phosphate + acetyl-CoA = N-acetyl-alpha-D-glucosamine 1-phosphate + CoA + H(+). The enzyme catalyses N-acetyl-alpha-D-glucosamine 1-phosphate + UTP + H(+) = UDP-N-acetyl-alpha-D-glucosamine + diphosphate. The protein operates within nucleotide-sugar biosynthesis; UDP-N-acetyl-alpha-D-glucosamine biosynthesis; N-acetyl-alpha-D-glucosamine 1-phosphate from alpha-D-glucosamine 6-phosphate (route II): step 2/2. It functions in the pathway nucleotide-sugar biosynthesis; UDP-N-acetyl-alpha-D-glucosamine biosynthesis; UDP-N-acetyl-alpha-D-glucosamine from N-acetyl-alpha-D-glucosamine 1-phosphate: step 1/1. Its pathway is bacterial outer membrane biogenesis; LPS lipid A biosynthesis. In terms of biological role, catalyzes the last two sequential reactions in the de novo biosynthetic pathway for UDP-N-acetylglucosamine (UDP-GlcNAc). The C-terminal domain catalyzes the transfer of acetyl group from acetyl coenzyme A to glucosamine-1-phosphate (GlcN-1-P) to produce N-acetylglucosamine-1-phosphate (GlcNAc-1-P), which is converted into UDP-GlcNAc by the transfer of uridine 5-monophosphate (from uridine 5-triphosphate), a reaction catalyzed by the N-terminal domain. The protein is Bifunctional protein GlmU of Symbiobacterium thermophilum (strain DSM 24528 / JCM 14929 / IAM 14863 / T).